Here is a 186-residue protein sequence, read N- to C-terminus: NADH dehydrogenase [ubiquinone] 1 beta subcomplex subunit 8, mitochondrial (186 aa).

A mitochondrion-targeting transit peptide spans 1 to 28 (MAAARAGVLGVRWLQKAARNVVPLGART). A helical transmembrane segment spans residues 133-153 (LFGFVAFMLFMFWVGETYPAY).

The protein belongs to the complex I NDUFB8 subunit family. Complex I is composed of 45 different subunits.

The protein resides in the mitochondrion inner membrane. In terms of biological role, accessory subunit of the mitochondrial membrane respiratory chain NADH dehydrogenase (Complex I), that is believed not to be involved in catalysis. Complex I functions in the transfer of electrons from NADH to the respiratory chain. The immediate electron acceptor for the enzyme is believed to be ubiquinone. This chain is NADH dehydrogenase [ubiquinone] 1 beta subcomplex subunit 8, mitochondrial (NDUFB8), found in Bos taurus (Bovine).